Consider the following 376-residue polypeptide: MKKIILVAGGTGGHFFPAVALGEELIKRGYEVHFITDLRCKQYIKQDMKVIFHILDLKRSGNIFLFLPRLSIAVLKAIKLLYNMKPSVTVGFGGYPVIAPMFAAIFLRVPIIIHEQNSYLGKVNKFFASFAKKIAISYEKIKNLPEFAKSKIVVTGGVVRENIRELKVIEMSSRGLTTGSKKSLIKALDSVVKPRHDKLFTIFIFGGSQGAKLFSELIPASIQILMQKQPSLELNIIQQAALDDQVKIKDIYSKLNITYEVAEFFDNMALQYKEADLVISRAGASTIEELTYIGLPAIFIPLPSAADNHQYYNAQLLADEKTGWCLEQNNISAGKLADKILDLISNPKILEDASQNLLKRRKEGHKLLSNLIEEVI.

Residues 11 to 13 (TGG), N117, R160, S208, and Q310 contribute to the UDP-N-acetyl-alpha-D-glucosamine site.

The protein belongs to the glycosyltransferase 28 family. MurG subfamily.

Its subcellular location is the cell inner membrane. It carries out the reaction di-trans,octa-cis-undecaprenyl diphospho-N-acetyl-alpha-D-muramoyl-L-alanyl-D-glutamyl-meso-2,6-diaminopimeloyl-D-alanyl-D-alanine + UDP-N-acetyl-alpha-D-glucosamine = di-trans,octa-cis-undecaprenyl diphospho-[N-acetyl-alpha-D-glucosaminyl-(1-&gt;4)]-N-acetyl-alpha-D-muramoyl-L-alanyl-D-glutamyl-meso-2,6-diaminopimeloyl-D-alanyl-D-alanine + UDP + H(+). Its pathway is cell wall biogenesis; peptidoglycan biosynthesis. Functionally, cell wall formation. Catalyzes the transfer of a GlcNAc subunit on undecaprenyl-pyrophosphoryl-MurNAc-pentapeptide (lipid intermediate I) to form undecaprenyl-pyrophosphoryl-MurNAc-(pentapeptide)GlcNAc (lipid intermediate II). The chain is UDP-N-acetylglucosamine--N-acetylmuramyl-(pentapeptide) pyrophosphoryl-undecaprenol N-acetylglucosamine transferase from Rickettsia rickettsii (strain Iowa).